The chain runs to 160 residues: Ribosome-binding factor A (160 aa).

Residues K112–E122 show a composition bias toward basic and acidic residues. The disordered stretch occupies residues K112–K160. Residues E141–K160 show a composition bias toward acidic residues.

This sequence belongs to the RbfA family. Monomer. Binds 30S ribosomal subunits, but not 50S ribosomal subunits or 70S ribosomes.

Its subcellular location is the cytoplasm. Functionally, one of several proteins that assist in the late maturation steps of the functional core of the 30S ribosomal subunit. Associates with free 30S ribosomal subunits (but not with 30S subunits that are part of 70S ribosomes or polysomes). Required for efficient processing of 16S rRNA. May interact with the 5'-terminal helix region of 16S rRNA. The sequence is that of Ribosome-binding factor A from Streptomyces coelicolor (strain ATCC BAA-471 / A3(2) / M145).